The chain runs to 776 residues: Transferrin receptor protein 1 (776 aa).

At 1 to 70 the chain is on the cytoplasmic side; sequence MDHARAALSN…QPQRNGKRLC (70 aa). Residues 19-22 carry the Endocytosis signal motif; that stretch reads YTRF. Ser-23 is modified (phosphoserine). Cys-70 carries S-palmitoyl cysteine lipidation. The chain crosses the membrane as a helical; Signal-anchor for type II membrane protein span at residues 71-91; sequence FLVIAAVLLLLIGFLIGYLSY. Over 92-776 the chain is Extracellular; the sequence is RGRIELAARC…GDIWETDNEF (685 aa). Residues 230 to 322 enclose the PA domain; it reads SESGSVSGKP…GTGDPYTPGF (93 aa). N-linked (GlcNAc...) asparagine glycosylation is found at Asn-261, Asn-326, and Asn-391. Residues 586 to 776 are ligand-binding; that stretch reads KGDTLENLRK…GDIWETDNEF (191 aa). Positions 662–664 match the Cell attachment site motif; sequence RGD. Residue Asn-738 is glycosylated (N-linked (GlcNAc...) asparagine).

This sequence belongs to the peptidase M28 family. M28B subfamily. As to quaternary structure, homodimer; disulfide-linked. Binds one transferrin molecule per subunit. In terms of processing, stearoylated. Stearoylation does not affect iron uptake. N- and O-glycosylated, phosphorylated and palmitoylated.

Its subcellular location is the cell membrane. The protein localises to the melanosome. Its function is as follows. Cellular uptake of iron occurs via receptor-mediated endocytosis of ligand-occupied transferrin receptor into specialized endosomes. Endosomal acidification leads to iron release. The apotransferrin-receptor complex is then recycled to the cell surface with a return to neutral pH and the concomitant loss of affinity of apotransferrin for its receptor. Transferrin receptor is necessary for development of erythrocytes and the nervous system. Acts as a lipid sensor that regulates mitochondrial fusion by regulating activation of the JNK pathway. When dietary levels of stearate (C18:0) are low, promotes activation of the JNK pathway, resulting in HUWE1-mediated ubiquitination and subsequent degradation of the mitofusin MFN2 and inhibition of mitochondrial fusion. When dietary levels of stearate (C18:0) are high, TFRC stearoylation inhibits activation of the JNK pathway and thus degradation of the mitofusin MFN2. Mediates uptake of NICOL1 into fibroblasts where it may regulate extracellular matrix production. In Gallus gallus (Chicken), this protein is Transferrin receptor protein 1 (TFRC).